The primary structure comprises 302 residues: MHYPTALLFLILVNGAQAFRICAFNAQRLTLAKVAREQVMDTLVRILARCDIMVLQEVVDSSGSAIPLLLRELNRFDASGPYSTLSSPQLGRTTYVETYVYFYRSHKTQVLSSYVYNDEDDVFAREPFVAQFSLPSDVLPSLVLVPLHTTPKAVEKELNALYDVFLEVSQHWQSKDVILLGDFNADCASLTKKRLDKLELRTEPGFHWVIADGEDTTVRASTHCAYDRIVLHGERCRSLLHTAAAFDFPTTFQLTEEEALNISDHYPVEVELKLSQAHSVQPLSLTVLLLLSLLSPQLCPAT.

An N-terminal signal peptide occupies residues 1–18 (MHYPTALLFLILVNGAQA). Residues glutamate 97 and histidine 148 contribute to the active site. Cysteines 187 and 224 form a disulfide. Residue asparagine 261 is glycosylated (N-linked (GlcNAc...) asparagine).

It belongs to the DNase I family.

Its subcellular location is the endoplasmic reticulum. This chain is Deoxyribonuclease-1-like 1 (DNASE1L1), found in Chlorocebus aethiops (Green monkey).